Consider the following 216-residue polypeptide: Protein-L-isoaspartate O-methyltransferase (216 aa).

S66 is an active-site residue.

Belongs to the methyltransferase superfamily. L-isoaspartyl/D-aspartyl protein methyltransferase family.

Its subcellular location is the cytoplasm. The enzyme catalyses [protein]-L-isoaspartate + S-adenosyl-L-methionine = [protein]-L-isoaspartate alpha-methyl ester + S-adenosyl-L-homocysteine. Its function is as follows. Catalyzes the methyl esterification of L-isoaspartyl residues in peptides and proteins that result from spontaneous decomposition of normal L-aspartyl and L-asparaginyl residues. It plays a role in the repair and/or degradation of damaged proteins. The chain is Protein-L-isoaspartate O-methyltransferase from Dechloromonas aromatica (strain RCB).